The sequence spans 335 residues: Foldase protein PrsA (335 aa).

An N-terminal signal peptide occupies residues 1–22; that stretch reads MRSAKKLLSVLCLGVFILTFTA. Residue Cys23 is the site of N-palmitoyl cysteine attachment. A lipid anchor (S-diacylglycerol cysteine) is attached at Cys23. Residues 194 to 285 enclose the PpiC domain; it reads PNTMNVSHIL…FGYHIIKINS (92 aa).

It belongs to the PrsA family.

Its subcellular location is the cell membrane. The catalysed reaction is [protein]-peptidylproline (omega=180) = [protein]-peptidylproline (omega=0). In terms of biological role, plays a major role in protein secretion by helping the post-translocational extracellular folding of several secreted proteins. This chain is Foldase protein PrsA, found in Clostridium botulinum (strain Loch Maree / Type A3).